Reading from the N-terminus, the 307-residue chain is Probable GTP 3',8-cyclase (307 aa).

One can recognise a Radical SAM core domain in the interval 5–231 (RFGRPVTNLR…MHRRKKYFIP (227 aa)). Residue R14 participates in GTP binding. C21, C25, and C28 together coordinate [4Fe-4S] cluster. K62 contacts GTP. An S-adenosyl-L-methionine-binding site is contributed by G66. A GTP-binding site is contributed by T91. Residue S115 coordinates S-adenosyl-L-methionine. GTP is bound at residue K151. M190 provides a ligand contact to S-adenosyl-L-methionine. C251 and C254 together coordinate [4Fe-4S] cluster. 256–258 (RLR) is a binding site for GTP. C268 serves as a coordination point for [4Fe-4S] cluster.

The protein belongs to the radical SAM superfamily. MoaA family. [4Fe-4S] cluster is required as a cofactor.

It catalyses the reaction GTP + AH2 + S-adenosyl-L-methionine = (8S)-3',8-cyclo-7,8-dihydroguanosine 5'-triphosphate + 5'-deoxyadenosine + L-methionine + A + H(+). Its pathway is cofactor biosynthesis; molybdopterin biosynthesis. In terms of biological role, catalyzes the cyclization of GTP to (8S)-3',8-cyclo-7,8-dihydroguanosine 5'-triphosphate. The sequence is that of Probable GTP 3',8-cyclase from Thermococcus kodakarensis (strain ATCC BAA-918 / JCM 12380 / KOD1) (Pyrococcus kodakaraensis (strain KOD1)).